A 332-amino-acid chain; its full sequence is MSSTTASPVTVAVTGAAGHIGYAALFRIAAGAMLGHTTPVTLRLLELPDAVRAAEGVVMELEDGAFPLLAGTEIYDDPTRAFDGVDVALLIGARPRTKGMERADLLGANAEIFATSGKALNAGASPDVRVLVVGNPANTNALVASAHAPDIPADRFTALTRLDHNRAVAATARHSGVPVTEISRMTIWGNHSPTQYPDIFHAVVGGRSGADYAADTRWLTDDFIPTVARRGTAIIEARGASSAASAANGAIDHIDDWVHGTPDGDWTSVALPSPGAYGVDEGLVCSFPCRSVGGRWEIVEGLDINPFSRARIDASVAELRTERDAVAALGLL.

Residue 15–21 (GAAGHIG) coordinates NAD(+). Positions 96 and 102 each coordinate substrate. NAD(+)-binding positions include Asn109 and 133–135 (VGN). Substrate contacts are provided by Asn135 and Arg166. Catalysis depends on His191, which acts as the Proton acceptor.

The protein belongs to the LDH/MDH superfamily. MDH type 2 family.

The enzyme catalyses (S)-malate + NAD(+) = oxaloacetate + NADH + H(+). Functionally, catalyzes the reversible oxidation of malate to oxaloacetate. The protein is Malate dehydrogenase of Mycolicibacterium vanbaalenii (strain DSM 7251 / JCM 13017 / BCRC 16820 / KCTC 9966 / NRRL B-24157 / PYR-1) (Mycobacterium vanbaalenii).